A 79-amino-acid polypeptide reads, in one-letter code: Serine protease inhibitor Kazal-type 1 (79 aa).

Positions methionine 1–alanine 18 are cleaved as a signal peptide. A Kazal-like domain is found at asparagine 26–cysteine 79. 3 cysteine pairs are disulfide-bonded: cysteine 32–cysteine 61, cysteine 39–cysteine 58, and cysteine 47–cysteine 79.

It localises to the secreted. Functionally, serine protease inhibitor which exhibits anti-trypsin activity. In the pancreas, protects against trypsin-catalyzed premature activation of zymogens. Its function is as follows. In the male reproductive tract, binds to sperm heads where it modulates sperm capacitance by inhibiting calcium uptake and nitrogen oxide (NO) production. This Rattus norvegicus (Rat) protein is Serine protease inhibitor Kazal-type 1.